Reading from the N-terminus, the 227-residue chain is Cytidylate kinase (227 aa).

12–20 (GPSGVGKGT) contacts ATP.

This sequence belongs to the cytidylate kinase family. Type 1 subfamily.

It localises to the cytoplasm. It catalyses the reaction CMP + ATP = CDP + ADP. It carries out the reaction dCMP + ATP = dCDP + ADP. The protein is Cytidylate kinase of Shewanella denitrificans (strain OS217 / ATCC BAA-1090 / DSM 15013).